Reading from the N-terminus, the 174-residue chain is Peptide deformylase (174 aa).

Fe cation is bound by residues cysteine 96 and histidine 138. Glutamate 139 is an active-site residue. Position 142 (histidine 142) interacts with Fe cation.

This sequence belongs to the polypeptide deformylase family. It depends on Fe(2+) as a cofactor.

The catalysed reaction is N-terminal N-formyl-L-methionyl-[peptide] + H2O = N-terminal L-methionyl-[peptide] + formate. Removes the formyl group from the N-terminal Met of newly synthesized proteins. Requires at least a dipeptide for an efficient rate of reaction. N-terminal L-methionine is a prerequisite for activity but the enzyme has broad specificity at other positions. The sequence is that of Peptide deformylase from Helicobacter pylori (strain G27).